We begin with the raw amino-acid sequence, 418 residues long: tRNA-2-methylthio-N(6)-dimethylallyladenosine synthase (418 aa).

The 117-residue stretch at 2 to 118 folds into the MTTase N-terminal domain; the sequence is PGYYLWTIGC…WGEIPEGFIL (117 aa). Positions 11, 47, 81, 134, 138, and 141 each coordinate [4Fe-4S] cluster. The Radical SAM core domain occupies 120–352; that stretch reads LKPPVSASIT…DLQKETVSKA (233 aa). One can recognise a TRAM domain in the interval 354–414; sequence SALVDTFAEV…PWSLQAKLVK (61 aa).

The protein belongs to the methylthiotransferase family. MiaB subfamily. In terms of assembly, monomer. Requires [4Fe-4S] cluster as cofactor.

The protein resides in the cytoplasm. The enzyme catalyses N(6)-dimethylallyladenosine(37) in tRNA + (sulfur carrier)-SH + AH2 + 2 S-adenosyl-L-methionine = 2-methylsulfanyl-N(6)-dimethylallyladenosine(37) in tRNA + (sulfur carrier)-H + 5'-deoxyadenosine + L-methionine + A + S-adenosyl-L-homocysteine + 2 H(+). In terms of biological role, catalyzes the methylthiolation of N6-(dimethylallyl)adenosine (i(6)A), leading to the formation of 2-methylthio-N6-(dimethylallyl)adenosine (ms(2)i(6)A) at position 37 in tRNAs that read codons beginning with uridine. The chain is tRNA-2-methylthio-N(6)-dimethylallyladenosine synthase from Dehalococcoides mccartyi (strain ATCC BAA-2266 / KCTC 15142 / 195) (Dehalococcoides ethenogenes (strain 195)).